A 78-amino-acid polypeptide reads, in one-letter code: UPF0270 protein YPO0179/y3960/YP_0178 (78 aa).

Belongs to the UPF0270 family.

The sequence is that of UPF0270 protein YPO0179/y3960/YP_0178 from Yersinia pestis.